The sequence spans 504 residues: Glycerol kinase (504 aa).

An ADP-binding site is contributed by Thr16. Positions 16 and 17 each coordinate ATP. Thr16 lines the sn-glycerol 3-phosphate pocket. Arg20 is a binding site for ADP. The sn-glycerol 3-phosphate site is built by Arg86, Glu87, Tyr138, and Asp247. Glycerol contacts are provided by Arg86, Glu87, Tyr138, Asp247, and Gln248. 2 residues coordinate ADP: Thr269 and Gly316. Residues Thr269, Gly316, Gln320, and Gly417 each contribute to the ATP site. ADP contacts are provided by Gly417 and Asn421.

It belongs to the FGGY kinase family.

The catalysed reaction is glycerol + ATP = sn-glycerol 3-phosphate + ADP + H(+). The protein operates within polyol metabolism; glycerol degradation via glycerol kinase pathway; sn-glycerol 3-phosphate from glycerol: step 1/1. With respect to regulation, inhibited by fructose 1,6-bisphosphate (FBP). Functionally, key enzyme in the regulation of glycerol uptake and metabolism. Catalyzes the phosphorylation of glycerol to yield sn-glycerol 3-phosphate. In Trichodesmium erythraeum (strain IMS101), this protein is Glycerol kinase.